The primary structure comprises 439 residues: Acyl-coenzyme A thioesterase 10, mitochondrial (439 aa).

Residues 1-21 (MKRAAMRLWTLNKGLLTHGRG) constitute a mitochondrion transit peptide. 2 consecutive HotDog ACOT-type domains span residues 85 to 209 (SYIE…QDSE) and 289 to 401 (EDTK…EKEV).

The protein belongs to the acyl coenzyme A hydrolase family.

The protein resides in the mitochondrion. Functionally, catalyzes the hydrolysis of acyl-CoAs into free fatty acids and coenzyme A (CoASH), regulating their respective intracellular levels. Active on long chain acyl-CoAs. The protein is Acyl-coenzyme A thioesterase 10, mitochondrial of Mus musculus (Mouse).